Reading from the N-terminus, the 274-residue chain is SWI/SNF chromatin-remodeling complex subunit snf30 (274 aa).

2 stretches are compositionally biased toward polar residues: residues 123 to 150 (TLSY…GTMQ) and 157 to 167 (PSLTRSDSVSS). The segment at 123-167 (TLSYPPSNGDSSSYANGTDLHGNTGTMQQEEKANPSLTRSDSVSS) is disordered.

In terms of assembly, component of the SWI/SNF global transcription activator complex composed of at least arp9, arp42, snf5, snf22, snf30, sbf59, sol1, ssr1, ssr2, ssr3, ssr4 and tfg3.

The protein localises to the cytoplasm. It is found in the nucleus. Component of the SWI/SNF complex, an ATP-dependent chromatin remodeling complex, required for the positive and negative regulation of gene expression of a large number of genes. It changes chromatin structure by altering DNA-histone contacts within a nucleosome, leading eventually to a change in nucleosome position, thus facilitating or repressing binding of gene-specific transcription factors. The polypeptide is SWI/SNF chromatin-remodeling complex subunit snf30 (snf30) (Schizosaccharomyces pombe (strain 972 / ATCC 24843) (Fission yeast)).